Consider the following 369-residue polypeptide: MDTDLDVPMQDAVTEQLTPTVSEDMDLNNNSSDNNAEEFSVDDLKPGSSGIADHKSSKPLELNNTNINQLDQWIEHLSKCEPLSEDDVARLCKMAVDVLQFEENVKPINVPVTICGDVHGQFHDLLELFKIGGPCPDTNYLFMGDYVDRGYYSVETVSYLVAMKVRYPHRITILRGNHESRQITQVYGFYDECLRKYGSANVWKMFTDLFDYFPITALVDNKIFCLHGGLSPMIETIDQVRELNRIQEVPHEGPMCDLLWSDPDDRGGWGISPRGAGFTFGQDVSEQFNHTNDLSLIARAHQLVMEGYAWSHQQNVVTIFSAPNYCYRCGNQAAIMEVDENHNRQFLQYDPSVRPGEPSVSRKTPDYFL.

The interval 1–57 (MDTDLDVPMQDAVTEQLTPTVSEDMDLNNNSSDNNAEEFSVDDLKPGSSGIADHKSS) is disordered. 4 residues coordinate Mn(2+): Asp-117, His-119, Asp-145, and Asn-177. His-178 serves as the catalytic Proton donor. The Mn(2+) site is built by His-227 and His-301. Positions 348–369 (QYDPSVRPGEPSVSRKTPDYFL) are disordered. Leu-369 is modified (leucine methyl ester).

The protein belongs to the PPP phosphatase family. PP-2A subfamily. As to quaternary structure, inactivated in a complex with phosphatase methylesterase PPE1 (PP2Ai). Interacts with phosphatase 2A activator RRD2, which can reactivate PP2Ai by dissociating the catalytic subunit from the complex. Forms a ternary complex with RRD2-TAP42. The cofactor is Mn(2+). Post-translationally, reversibly methyl esterified on Leu-369 by leucine carboxyl methyltransferase 1 (PPM1) and protein phosphatase methylesterase 1 (PPE1). Carboxyl methylation influences the affinity of the catalytic subunit for the different regulatory subunits, thereby modulating the PP2A holoenzyme's substrate specificity, enzyme activity and cellular localization.

It carries out the reaction O-phospho-L-seryl-[protein] + H2O = L-seryl-[protein] + phosphate. The catalysed reaction is O-phospho-L-threonyl-[protein] + H2O = L-threonyl-[protein] + phosphate. Its function is as follows. Exact function not known, phosphatase 2A performs an essential cellular function. This is Serine/threonine-protein phosphatase PP2A-1 catalytic subunit (PPH21) from Saccharomyces cerevisiae (strain ATCC 204508 / S288c) (Baker's yeast).